A 99-amino-acid polypeptide reads, in one-letter code: Nucleoid-associated protein SPN23F10240 (99 aa).

Belongs to the YbaB/EbfC family. In terms of assembly, homodimer.

It localises to the cytoplasm. Its subcellular location is the nucleoid. In terms of biological role, binds to DNA and alters its conformation. May be involved in regulation of gene expression, nucleoid organization and DNA protection. In Streptococcus pneumoniae (strain ATCC 700669 / Spain 23F-1), this protein is Nucleoid-associated protein SPN23F10240.